The following is a 173-amino-acid chain: DRBM domain-containing protein 340R (173 aa).

The 73-residue stretch at 30–102 folds into the DRBM domain; that stretch reads NSIGFLNEFC…AFKTIKELNL (73 aa).

This chain is DRBM domain-containing protein 340R, found in Invertebrate iridescent virus 6 (IIV-6).